Here is a 232-residue protein sequence, read N- to C-terminus: Large ribosomal subunit protein uL1 (232 aa).

It belongs to the universal ribosomal protein uL1 family. In terms of assembly, part of the 50S ribosomal subunit.

In terms of biological role, binds directly to 23S rRNA. The L1 stalk is quite mobile in the ribosome, and is involved in E site tRNA release. Functionally, protein L1 is also a translational repressor protein, it controls the translation of the L11 operon by binding to its mRNA. This Rhizobium meliloti (strain 1021) (Ensifer meliloti) protein is Large ribosomal subunit protein uL1.